The following is a 192-amino-acid chain: Peptidyl-tRNA hydrolase (192 aa).

Residue H17 participates in tRNA binding. The active-site Proton acceptor is H22. Residues F68, N70, and N116 each contribute to the tRNA site.

The protein belongs to the PTH family. As to quaternary structure, monomer.

The protein localises to the cytoplasm. The catalysed reaction is an N-acyl-L-alpha-aminoacyl-tRNA + H2O = an N-acyl-L-amino acid + a tRNA + H(+). In terms of biological role, hydrolyzes ribosome-free peptidyl-tRNAs (with 1 or more amino acids incorporated), which drop off the ribosome during protein synthesis, or as a result of ribosome stalling. Its function is as follows. Catalyzes the release of premature peptidyl moieties from peptidyl-tRNA molecules trapped in stalled 50S ribosomal subunits, and thus maintains levels of free tRNAs and 50S ribosomes. The protein is Peptidyl-tRNA hydrolase of Stenotrophomonas maltophilia (strain K279a).